The following is a 232-amino-acid chain: Phosphatidylserine decarboxylase proenzyme (232 aa).

Serine 190 functions as the Schiff-base intermediate with substrate; via pyruvic acid in the catalytic mechanism. Serine 190 bears the Pyruvic acid (Ser); by autocatalysis mark.

Belongs to the phosphatidylserine decarboxylase family. PSD-A subfamily. As to quaternary structure, heterodimer of a large membrane-associated beta subunit and a small pyruvoyl-containing alpha subunit. It depends on pyruvate as a cofactor. In terms of processing, is synthesized initially as an inactive proenzyme. Formation of the active enzyme involves a self-maturation process in which the active site pyruvoyl group is generated from an internal serine residue via an autocatalytic post-translational modification. Two non-identical subunits are generated from the proenzyme in this reaction, and the pyruvate is formed at the N-terminus of the alpha chain, which is derived from the carboxyl end of the proenzyme. The post-translation cleavage follows an unusual pathway, termed non-hydrolytic serinolysis, in which the side chain hydroxyl group of the serine supplies its oxygen atom to form the C-terminus of the beta chain, while the remainder of the serine residue undergoes an oxidative deamination to produce ammonia and the pyruvoyl prosthetic group on the alpha chain.

It is found in the cell membrane. The catalysed reaction is a 1,2-diacyl-sn-glycero-3-phospho-L-serine + H(+) = a 1,2-diacyl-sn-glycero-3-phosphoethanolamine + CO2. It functions in the pathway phospholipid metabolism; phosphatidylethanolamine biosynthesis; phosphatidylethanolamine from CDP-diacylglycerol: step 2/2. Functionally, catalyzes the formation of phosphatidylethanolamine (PtdEtn) from phosphatidylserine (PtdSer). This Rhodopseudomonas palustris (strain BisA53) protein is Phosphatidylserine decarboxylase proenzyme.